Here is a 184-residue protein sequence, read N- to C-terminus: SsrA-binding protein (184 aa).

The segment covering 1–11 has biased composition (polar residues); that stretch reads MAAKKSTPTDS. The disordered stretch occupies residues 1–31; sequence MAAKKSTPTDSGKSKGKKNKAQKGAGQKGAG.

It belongs to the SmpB family.

The protein resides in the cytoplasm. Its function is as follows. Required for rescue of stalled ribosomes mediated by trans-translation. Binds to transfer-messenger RNA (tmRNA), required for stable association of tmRNA with ribosomes. tmRNA and SmpB together mimic tRNA shape, replacing the anticodon stem-loop with SmpB. tmRNA is encoded by the ssrA gene; the 2 termini fold to resemble tRNA(Ala) and it encodes a 'tag peptide', a short internal open reading frame. During trans-translation Ala-aminoacylated tmRNA acts like a tRNA, entering the A-site of stalled ribosomes, displacing the stalled mRNA. The ribosome then switches to translate the ORF on the tmRNA; the nascent peptide is terminated with the 'tag peptide' encoded by the tmRNA and targeted for degradation. The ribosome is freed to recommence translation, which seems to be the essential function of trans-translation. The chain is SsrA-binding protein from Corynebacterium jeikeium (strain K411).